We begin with the raw amino-acid sequence, 453 residues long: Ribosome biogenesis protein SSF2 (453 aa).

Residues 1-11 show a composition bias toward basic residues; the sequence is MAKRRQKKRTH. 3 disordered regions span residues 1 to 22, 275 to 327, and 373 to 453; these read MAKR…ERDI, KAKH…KAIK, and AKMR…SEVE. One can recognise a Brix domain in the interval 26–348; sequence MVIRVGQTSL…LVKIEDGICS (323 aa). Positions 373-398 are enriched in basic and acidic residues; that stretch reads AKMRLKEQRRKEQEENIAKKKAVKDA. Residues 399 to 409 show a composition bias toward basic residues; the sequence is KKQRKLERRKA. Acidic residues predominate over residues 440–453; that stretch reads VPEDLDSDLFSEVE.

In terms of assembly, part of a complex that includes BRX1, RPF1, RPF2 and SSF1 or SSF2.

It localises to the nucleus. The protein resides in the nucleolus. Functionally, required for biogenesis of the 60S ribosomal subunit. The polypeptide is Ribosome biogenesis protein SSF2 (SSF2) (Saccharomyces cerevisiae (strain ATCC 204508 / S288c) (Baker's yeast)).